We begin with the raw amino-acid sequence, 394 residues long: Actin-related protein 2 (394 aa).

An N-acetylmethionine modification is found at M1. ATP contacts are provided by residues 160-162 (GDG) and 214-218 (RMIKE). An N6-acetyllysine modification is found at K299. 305-310 (GGSTMY) lines the ATP pocket. K322 bears the N6-acetyllysine mark.

The protein belongs to the actin family. ARP2 subfamily. In terms of assembly, component of the Arp2/3 complex composed of ACTR2/ARP2, ACTR3/ARP3, ARPC1B/p41-ARC, ARPC2/p34-ARC, ARPC3/p21-ARC, ARPC4/p20-ARC and ARPC5/p16-ARC.

Its subcellular location is the cytoplasm. The protein resides in the cytoskeleton. The protein localises to the cell projection. It localises to the nucleus. Functionally, ATP-binding component of the Arp2/3 complex, a multiprotein complex that mediates actin polymerization upon stimulation by nucleation-promoting factor (NPF). The Arp2/3 complex mediates the formation of branched actin networks in the cytoplasm, providing the force for cell motility. Seems to contact the pointed end of the daughter actin filament. In addition to its role in the cytoplasmic cytoskeleton, the Arp2/3 complex also promotes actin polymerization in the nucleus, thereby regulating gene transcription and repair of damaged DNA. The Arp2/3 complex promotes homologous recombination (HR) repair in response to DNA damage by promoting nuclear actin polymerization, leading to drive motility of double-strand breaks (DSBs). The polypeptide is Actin-related protein 2 (Actr2) (Rattus norvegicus (Rat)).